We begin with the raw amino-acid sequence, 2339 residues long: Voltage-dependent N-type calcium channel subunit alpha-1B (2339 aa).

Topologically, residues Met1–Arg90 are cytoplasmic. Gly residues predominate over residues Ala15 to Pro34. The tract at residues Ala15 to Leu37 is disordered. Arg22 is modified (omega-N-methylarginine). The stretch at Asn82 to Phe359 is one I repeat. A helical transmembrane segment spans residues Ile91–Leu114. Residues Glu115–Asp131 lie on the Extracellular side of the membrane. Residues Asp132 to Leu152 form a helical membrane-spanning segment. Residues Gly153–Arg163 lie on the Cytoplasmic side of the membrane. Residues Asn164–Ala182 form a helical membrane-spanning segment. Residues Gly183–Asp187 lie on the Extracellular side of the membrane. The chain crosses the membrane as a helical span at residues Leu188–Val211. Residues Val212–Val221 lie on the Cytoplasmic side of the membrane. Residues Pro222–Phe244 traverse the membrane as a helical segment. At Tyr245–Trp331 the chain is on the extracellular side. N-linked (GlcNAc...) asparagine glycosylation is present at Asn256. The helical transmembrane segment at Asn332–Ser356 threads the bilayer. Residues Gly357–Gln483 are Cytoplasmic-facing. Residues Gln379–Glu396 form a binding to the beta subunit region. Phosphoserine is present on Ser411. An ATP-binding site is contributed by Ala452 to Thr459. The II repeat unit spans residues Glu469–Leu713. Residues Ser484 to Met502 form a helical membrane-spanning segment. Residues Val503–Thr512 are Extracellular-facing. The chain crosses the membrane as a helical span at residues Thr513 to Tyr535. Topologically, residues Gly536–Ser545 are cytoplasmic. Ser545 is an a 1,2-diacyl-sn-glycero-3-phospho-(1D-myo-inositol-4,5-bisphosphate) binding site. Residues Ser546–Val567 form a helical membrane-spanning segment. At Lys568–Gly574 the chain is on the extracellular side. The helical transmembrane segment at Ile575 to Phe587 threads the bilayer. Positions 585 and 588 each coordinate a 1,2-diacyl-sn-glycero-3-phospho-(1D-myo-inositol-4,5-bisphosphate). Residues Lys588–Asn605 are Cytoplasmic-facing. Residues Ser606 to Leu631 form a helical membrane-spanning segment. Residues Phe632 to Gly683 lie on the Extracellular side of the membrane. Residues Met684 to Val710 traverse the membrane as a helical segment. The Cytoplasmic portion of the chain corresponds to Asp711–Tyr1156. Phosphoserine is present on residues Ser746, Ser749, and Ser784. Basic and acidic residues-rich tracts occupy residues Asp809–Pro827, Glu870–Gly891, Gly927–Pro937, Cys973–Ala984, and Thr999–Gln1026. Disordered regions lie at residues Asp809 to Gln1026 and Val1056 to His1084. Polar residues predominate over residues Gln1066–Val1083. Ser1074 is modified (phosphoserine). One copy of the III repeat lies at Asn1142–Phe1424. The chain crosses the membrane as a helical span at residues Phe1157–Glu1175. At Asp1176 to Pro1183 the chain is on the extracellular side. The helical transmembrane segment at Arg1184–Ile1208 threads the bilayer. Residues Asp1209–Asp1222 are Cytoplasmic-facing. Residues Leu1223 to Gly1243 traverse the membrane as a helical segment. Residues Ser1244–Ile1249 lie on the Extracellular side of the membrane. The chain crosses the membrane as a helical span at residues Ser1250–Leu1270. Residues Pro1271–Leu1288 are Cytoplasmic-facing. Residues Asn1289 to Leu1308 traverse the membrane as a helical segment. The Extracellular segment spans residues Phe1309–Met1395. A helical transmembrane segment spans residues Glu1396 to Ile1421. Residues Ile1422–Pro1476 lie on the Cytoplasmic side of the membrane. The stretch at Asn1461 to Phe1714 is one IV repeat. A helical membrane pass occupies residues Pro1477–Met1495. Residues Lys1496–Glu1503 lie on the Extracellular side of the membrane. The helical transmembrane segment at Tyr1504–Ile1528 threads the bilayer. Residues Ala1529–Asp1538 lie on the Cytoplasmic side of the membrane. The chain crosses the membrane as a helical span at residues Ala1539–Ile1560. The Extracellular segment spans residues Ala1561–Asn1566. N-linked (GlcNAc...) asparagine glycosylation is present at Asn1566. A helical membrane pass occupies residues Leu1567–Gly1585. The Cytoplasmic portion of the chain corresponds to Tyr1586–Tyr1604. A helical transmembrane segment spans residues Val1605–Phe1624. Residues Gly1625–Phe1686 lie on the Extracellular side of the membrane. A glycan (N-linked (GlcNAc...) asparagine) is linked at Asn1678. Residues Ala1687–Ile1710 traverse the membrane as a helical segment. Residues Met1711–Cys2339 lie on the Cytoplasmic side of the membrane. The 36-residue stretch at His1727–Pro1762 folds into the EF-hand domain. The Ca(2+) site is built by Asp1740, Arg1746, and Asp1751. The disordered stretch occupies residues Thr1983–Asn2312. The span at Pro2050 to Lys2064 shows a compositional bias: basic residues. Ser2067 bears the Phosphoserine mark. Residues Cys2099 to Gly2136 are compositionally biased toward basic and acidic residues. Polar residues-rich tracts occupy residues Pro2144–Ala2155 and Gly2165–Ser2181. Phosphoserine occurs at positions 2224, 2233, and 2256. The span at Ser2286–Ser2302 shows a compositional bias: low complexity.

It belongs to the calcium channel alpha-1 subunit (TC 1.A.1.11) family. CACNA1B subfamily. As to quaternary structure, multisubunit complex consisting of alpha-1, alpha-2, beta and delta subunits in a 1:1:1:1 ratio. The channel activity is directed by the pore-forming and voltage-sensitive alpha-1 subunit. In many cases, this subunit is sufficient to generate voltage-sensitive calcium channel activity. The auxiliary subunits beta and alpha-2/delta linked by a disulfide bridge regulate the channel activity. Interacts with RIMS1. Interacts with FMR1 (via C-terminus); this interaction induces a decrease in the number of presynaptic functional CACNA1B channels at the cell surface. In terms of processing, phosphorylated in vitro by CaM-kinase II, PKA, PKC and CGPK. As to expression, widespread expression throughout the brain. Highest levels in corpus striatum and midbrain.

It localises to the membrane. The catalysed reaction is Ca(2+)(in) = Ca(2+)(out). Is specifically blocked by omega-conotoxin GVIA. Is specifically blocked by omega-conotoxin MVIIA (ziconotide). Is insensitive to dihydropyridines (DHP). In terms of biological role, voltage-sensitive calcium channels (VSCC) mediate the entry of calcium ions into excitable cells and are also involved in a variety of calcium-dependent processes, including muscle contraction, hormone or neurotransmitter release, gene expression, cell motility, cell division and cell death. This alpha-1B subunit gives rise to N-type calcium currents. N-type calcium channels belong to the 'high-voltage activated' (HVA) group. They are involved in pain signaling. Calcium channels containing alpha-1B subunit may play a role in directed migration of immature neurons. Mediates Ca(2+) release probability at hippocampal neuronal soma and synaptic terminals. This is Voltage-dependent N-type calcium channel subunit alpha-1B (CACNA1B) from Oryctolagus cuniculus (Rabbit).